Reading from the N-terminus, the 367-residue chain is Holliday junction branch migration complex subunit RuvB (367 aa).

Positions 2–196 (TDEPLTDRPP…FGFTARLDFY (195 aa)) are large ATPase domain (RuvB-L). Residues Leu-35, Arg-36, Gly-77, Lys-80, Thr-81, Thr-82, 143–145 (EDF), Arg-186, Tyr-196, and Arg-233 each bind ATP. Thr-81 is a binding site for Mg(2+). Residues 197–267 (EPADLERIVH…VAQAALAVYE (71 aa)) are small ATPAse domain (RuvB-S). Residues 270-367 (EHGLDRLDRA…IDRDAGEPTA (98 aa)) form a head domain (RuvB-H) region. The DNA site is built by Arg-325 and Arg-330.

Belongs to the RuvB family. Homohexamer. Forms an RuvA(8)-RuvB(12)-Holliday junction (HJ) complex. HJ DNA is sandwiched between 2 RuvA tetramers; dsDNA enters through RuvA and exits via RuvB. An RuvB hexamer assembles on each DNA strand where it exits the tetramer. Each RuvB hexamer is contacted by two RuvA subunits (via domain III) on 2 adjacent RuvB subunits; this complex drives branch migration. In the full resolvosome a probable DNA-RuvA(4)-RuvB(12)-RuvC(2) complex forms which resolves the HJ.

The protein resides in the cytoplasm. The enzyme catalyses ATP + H2O = ADP + phosphate + H(+). Its function is as follows. The RuvA-RuvB-RuvC complex processes Holliday junction (HJ) DNA during genetic recombination and DNA repair, while the RuvA-RuvB complex plays an important role in the rescue of blocked DNA replication forks via replication fork reversal (RFR). RuvA specifically binds to HJ cruciform DNA, conferring on it an open structure. The RuvB hexamer acts as an ATP-dependent pump, pulling dsDNA into and through the RuvAB complex. RuvB forms 2 homohexamers on either side of HJ DNA bound by 1 or 2 RuvA tetramers; 4 subunits per hexamer contact DNA at a time. Coordinated motions by a converter formed by DNA-disengaged RuvB subunits stimulates ATP hydrolysis and nucleotide exchange. Immobilization of the converter enables RuvB to convert the ATP-contained energy into a lever motion, pulling 2 nucleotides of DNA out of the RuvA tetramer per ATP hydrolyzed, thus driving DNA branch migration. The RuvB motors rotate together with the DNA substrate, which together with the progressing nucleotide cycle form the mechanistic basis for DNA recombination by continuous HJ branch migration. Branch migration allows RuvC to scan DNA until it finds its consensus sequence, where it cleaves and resolves cruciform DNA. The protein is Holliday junction branch migration complex subunit RuvB of Acidothermus cellulolyticus (strain ATCC 43068 / DSM 8971 / 11B).